A 249-amino-acid polypeptide reads, in one-letter code: 3-deoxy-manno-octulosonate cytidylyltransferase (249 aa).

This sequence belongs to the KdsB family.

The protein resides in the cytoplasm. It carries out the reaction 3-deoxy-alpha-D-manno-oct-2-ulosonate + CTP = CMP-3-deoxy-beta-D-manno-octulosonate + diphosphate. It functions in the pathway nucleotide-sugar biosynthesis; CMP-3-deoxy-D-manno-octulosonate biosynthesis; CMP-3-deoxy-D-manno-octulosonate from 3-deoxy-D-manno-octulosonate and CTP: step 1/1. It participates in bacterial outer membrane biogenesis; lipopolysaccharide biosynthesis. Functionally, activates KDO (a required 8-carbon sugar) for incorporation into bacterial lipopolysaccharide in Gram-negative bacteria. This Coxiella burnetii (strain CbuG_Q212) (Coxiella burnetii (strain Q212)) protein is 3-deoxy-manno-octulosonate cytidylyltransferase.